Consider the following 163-residue polypeptide: Lipoprotein signal peptidase (163 aa).

A run of 3 helical transmembrane segments spans residues 11-31 (ILIAVFVVIFDQVTKYIIATT), 63-83 (KMTFFFIITIIILIALVYFFI), and 88-108 (YNLFMQVAISLLFAGALGNFI). Active-site residues include D118 and D136. Residues 131 to 151 (IFNIADSSLTIGVILIIIALL) traverse the membrane as a helical segment.

This sequence belongs to the peptidase A8 family.

Its subcellular location is the cell membrane. It catalyses the reaction Release of signal peptides from bacterial membrane prolipoproteins. Hydrolyzes -Xaa-Yaa-Zaa-|-(S,diacylglyceryl)Cys-, in which Xaa is hydrophobic (preferably Leu), and Yaa (Ala or Ser) and Zaa (Gly or Ala) have small, neutral side chains.. Its pathway is protein modification; lipoprotein biosynthesis (signal peptide cleavage). This protein specifically catalyzes the removal of signal peptides from prolipoproteins. The sequence is that of Lipoprotein signal peptidase from Staphylococcus aureus (strain MRSA252).